A 902-amino-acid polypeptide reads, in one-letter code: MVSPDNRPGTQGPSASAHAHDSRVPRKRPGSWDNNPSTAGNRAVKKRAVRACVSCRDRKVRCDVVNGGPPCTNCRLDDVDCVLKASNRGKHNPARYQARSRLSSNATAPRAPSPSDNINTDADTAAPGPAPGSASATVFRSDHSHGSVATGQPQERRGSQSVAHGDEETICDDDENENNSWHNQQEAEQTRIIHDSQVQPNDIVHETHCEQQPQPQPSQGAATRSTPSAQPANPQTSDYLVALAFQGFYALGWTEQDATEAPPSSSRMDNVSASANTPHADQNHLPLYISPHPSHLDKHDLEFLARKDCLTIPDNQLRDELIRIYVFVVYPFMPAIDLVDFLEPITGSSEVGTVSLLLFQAIMFASVTFIDMQLLQRYGFKNKRAARQVFFNRVKLLYSLGYEADRLTLVQSLLLMTYWYDSDSDEKHTWYWMGLALTTAHIEGLQRDLEEPQQMTKNGRLRRRIWWSCVIRDRLLGLGLRRPSRIQEDEFSVERLRLDDFDISLPPPPAVARLLAAPSYTGKDPVNRQRMANLCIDLSQLCFTIGRILHTQYTIASTPGAGSNYLRRAIVRPRSLKEQAHSFAKCDADLQEWFRSLAPESRYVPGARDGGAAAAQVENSTIRLHKILLYMKYLTAIGALHRPQVFYSGSDSIDPARKADSRRKLTEAAVAITKLAFDLQSNGQMCYAPTSSVPAFLSAALIHLLNIRSPDEETRNISIGRFCQCLDALHQLQSMYTAADEAVHIINNMTENAGFILPLLGIGNPMSKANGIAARNSRLFSAIGPSRVTTAYPSPAPATGNLDTSQEEMISAPIPGAGPTGVALTGQRSRQPSAGPNMTPSATPNLMSIWSAAGNIHSERDLPLPADLMAGIQLDLDAWYNIGDIIDPALMNFETGLDFLNS.

The segment at 1 to 47 (MVSPDNRPGTQGPSASAHAHDSRVPRKRPGSWDNNPSTAGNRAVKKR) is disordered. Residues 52-81 (CVSCRDRKVRCDVVNGGPPCTNCRLDDVDC) constitute a DNA-binding region (zn(2)-C6 fungal-type). Disordered regions lie at residues 92 to 189 (NPAR…EAEQ), 208 to 234 (HCEQQPQPQPSQGAATRSTPSAQPANP), 258 to 277 (ATEAPPSSSRMDNVSASANT), and 820 to 839 (TGVALTGQRSRQPSAGPNMT). Low complexity predominate over residues 120–137 (TDADTAAPGPAPGSASAT). Positions 168–177 (ETICDDDENE) are enriched in acidic residues. Composition is skewed to polar residues over residues 178–187 (NNSWHNQQEA), 220–234 (GAATRSTPSAQPANP), 262–277 (PPSSSRMDNVSASANT), and 826–839 (GQRSRQPSAGPNMT).

It is found in the nucleus. In terms of biological role, transcription factor; part of the Fusarium detoxification of benzoxazolinone cluster involved in the degradation of benzoxazolinones produced by the host plant. Maize, wheat, and rye produce the 2 benzoxazinone phytoanticipins 2,4-dihy-droxy-7-methoxy-1,4-benzoxazin-3-one (DIMBOA) and 2,4-dihydroxy-1,4-benzoxazin-3-one (DIBOA) that, due to their inherent instability once released, spontaneously degrade to the more stable corresponding benzoxazolinones, 6-methoxy-2-benzoxazolinone (MBOA) and 2-benzoxazolinone (BOA), respectively. FPSE_08121 positively regulates the expression of the FBD cluster gene FPSE_08120 in response to 2-aminophenol (2-AP) treatment and contributes quantitatively to benzoxazolinone tolerance. This chain is Transcription factor FPSE_08121, found in Fusarium pseudograminearum (strain CS3096) (Wheat and barley crown-rot fungus).